We begin with the raw amino-acid sequence, 338 residues long: Ketol-acid reductoisomerase (NADP(+)) (338 aa).

Positions M1–T181 constitute a KARI N-terminal Rossmann domain. Residues Y24–Q27, R47, and S52 each bind NADP(+). H107 is an active-site residue. G133 contributes to the NADP(+) binding site. The KARI C-terminal knotted domain maps to N182–I327. Mg(2+) contacts are provided by D190, E194, E226, and E230. S251 contributes to the substrate binding site.

It belongs to the ketol-acid reductoisomerase family. The cofactor is Mg(2+).

The catalysed reaction is (2R)-2,3-dihydroxy-3-methylbutanoate + NADP(+) = (2S)-2-acetolactate + NADPH + H(+). The enzyme catalyses (2R,3R)-2,3-dihydroxy-3-methylpentanoate + NADP(+) = (S)-2-ethyl-2-hydroxy-3-oxobutanoate + NADPH + H(+). It participates in amino-acid biosynthesis; L-isoleucine biosynthesis; L-isoleucine from 2-oxobutanoate: step 2/4. Its pathway is amino-acid biosynthesis; L-valine biosynthesis; L-valine from pyruvate: step 2/4. Involved in the biosynthesis of branched-chain amino acids (BCAA). Catalyzes an alkyl-migration followed by a ketol-acid reduction of (S)-2-acetolactate (S2AL) to yield (R)-2,3-dihydroxy-isovalerate. In the isomerase reaction, S2AL is rearranged via a Mg-dependent methyl migration to produce 3-hydroxy-3-methyl-2-ketobutyrate (HMKB). In the reductase reaction, this 2-ketoacid undergoes a metal-dependent reduction by NADPH to yield (R)-2,3-dihydroxy-isovalerate. The protein is Ketol-acid reductoisomerase (NADP(+)) of Polaromonas sp. (strain JS666 / ATCC BAA-500).